The chain runs to 203 residues: Protein-L-isoaspartate O-methyltransferase (203 aa).

Residue S50 is part of the active site.

This sequence belongs to the methyltransferase superfamily. L-isoaspartyl/D-aspartyl protein methyltransferase family.

It localises to the cytoplasm. The catalysed reaction is [protein]-L-isoaspartate + S-adenosyl-L-methionine = [protein]-L-isoaspartate alpha-methyl ester + S-adenosyl-L-homocysteine. Functionally, catalyzes the methyl esterification of L-isoaspartyl residues in peptides and proteins that result from spontaneous decomposition of normal L-aspartyl and L-asparaginyl residues. It plays a role in the repair and/or degradation of damaged proteins. The polypeptide is Protein-L-isoaspartate O-methyltransferase (Methanococcoides burtonii (strain DSM 6242 / NBRC 107633 / OCM 468 / ACE-M)).